The sequence spans 238 residues: MTDTPENQTPNDLPAGHSRSIRSFVLRQSHMTAAQQRAIDTLWDSFGIDYQATPADLDARFGSSRPKILEIGFGMGMASAEIARRLPETDFLAIDVHGPGVGNLLKLINENHLENIRVMRHDAVEVVENMLQDGSLDGIHIFFPDPWHKKRHHKRRLIQAPFIAKLLPKLKTGGYIHLATDWEEYAQQMLEVLSSFDNLQNTAADYAPTPDYRPETKFEARGKRLGHGVWDLVFKRIG.

S-adenosyl-L-methionine contacts are provided by Glu-70, Asp-95, Asp-122, and Asp-145. Asp-145 is an active-site residue. Residues Lys-149, Asp-181, and 216–219 (TKFE) each bind substrate.

Belongs to the class I-like SAM-binding methyltransferase superfamily. TrmB family.

The enzyme catalyses guanosine(46) in tRNA + S-adenosyl-L-methionine = N(7)-methylguanosine(46) in tRNA + S-adenosyl-L-homocysteine. The protein operates within tRNA modification; N(7)-methylguanine-tRNA biosynthesis. Functionally, catalyzes the formation of N(7)-methylguanine at position 46 (m7G46) in tRNA. The sequence is that of tRNA (guanine-N(7)-)-methyltransferase from Neisseria gonorrhoeae (strain ATCC 700825 / FA 1090).